Here is a 207-residue protein sequence, read N- to C-terminus: Dephospho-CoA kinase (207 aa).

One can recognise a DPCK domain in the interval 5–203 (AVGLTGGIAC…ARYRALASVF (199 aa)). Residue 13–18 (ACGKSL) participates in ATP binding.

This sequence belongs to the CoaE family.

The protein localises to the cytoplasm. It catalyses the reaction 3'-dephospho-CoA + ATP = ADP + CoA + H(+). It functions in the pathway cofactor biosynthesis; coenzyme A biosynthesis; CoA from (R)-pantothenate: step 5/5. In terms of biological role, catalyzes the phosphorylation of the 3'-hydroxyl group of dephosphocoenzyme A to form coenzyme A. This is Dephospho-CoA kinase from Xylella fastidiosa (strain 9a5c).